The chain runs to 63 residues: MASRILYAAAVVAAVAVSSLAGVAYAADAPAPSPTSGAAAVSSSLVAAVLCPAVALLLGNLRQ.

The first 26 residues, 1–26 (MASRILYAAAVVAAVAVSSLAGVAYA), serve as a signal peptide directing secretion. The GPI-anchor amidated serine moiety is linked to residue serine 36. A propeptide spans 37–63 (GAAAVSSSLVAAVLCPAVALLLGNLRQ) (removed in mature form).

It belongs to the AG-peptide AGP family. In terms of processing, O-glycosylated on hydroxyprolines; noncontiguous hydroxylproline residues are glycosylated with arabinogalactan. In terms of tissue distribution, expressed in roots, stems, leaves, flowers and seeds.

The protein localises to the vacuole. The protein resides in the aleurone grain membrane. Proteoglycan that seems to be implicated in diverse developmental roles such as differentiation, cell-cell recognition, embryogenesis and programmed cell death. This Oryza sativa subsp. japonica (Rice) protein is Arabinogalactan peptide 3 (AGPEP3).